The chain runs to 81 residues: Elsinochrome C biosynthesis cluster protein SNOG_08613 (81 aa).

Its function is as follows. Part of the gene cluster that mediates the biosynthesis of elsinochrome C, a perelyenequinone phytotoxin structurally similar to cercosporin. The first step of elsinochrome C biosynthesis is performed by the polyketide synthase elcA which catalyzes the formation of nor-toralactone. The starter unit acyltransferase (SAT) domain of elcA initiates polyketide extension by the selective utilization of acetyl-CoA, which is elongated to the heptaketide in the beta-ketoacyl synthase (KS) domain by successive condensations with six malonyl units introduced by the malonyl acyltransferase (MAT) domain. The product template (PT) domain catalyzes C4-C9 and C2-C11 aldol cyclizations and dehydrations to a trihydroxynaphthalene, which is thought to be delivered to the thioesterase (TE) domain for product release. The bifunctional enzyme elcB then methylates nor-toralactone to toralactone before conducting an unusual oxidative aromatic ring opening. The next step in perylenequinone biosynthesis is an O-methylation at the nascent OH-6 of the elcB product performed by the O-methyltransferase elcD. The oxidative coupling of the two monomeric naphthol units in perylenequinone biosynthesis is catalyzed by the FAD-dependent monooxygenase elcE and the multicopper oxidase elcG. ElcG might catalyze the first intermolecular coupling in a regio- and stereo-selective manner via a phenol radical coupling mechanism and the elcE could forge the second C-C bond intramolecularly via a hydride transfer mechanism. The fasciclin domain-containing protein elcF might also play a role duting this step. The last piece of the puzzle in the biosynthesis of elsinochrome C is the additional annulation by enolate coupling to afford the dihydrobenzo(ghi)perylenequinone system, catalyzed by the FAD-dependent monooxygenase elcH. The polypeptide is Elsinochrome C biosynthesis cluster protein SNOG_08613 (Phaeosphaeria nodorum (strain SN15 / ATCC MYA-4574 / FGSC 10173) (Glume blotch fungus)).